We begin with the raw amino-acid sequence, 352 residues long: SKP1-like protein 20 (352 aa).

The interval 108–167 (TSAADSLQLKPLVDLTSRALARIIEGKNPEEIREIFHLPDDLTEEEKLEPLKNSMDDPRI) is interaction with the F-box domain of F-box proteins. 2 disordered regions span residues 214 to 251 (KAVK…RSKQ) and 267 to 288 (LLSA…DIDD). The span at 216–230 (VKMSKGKKKKKKKKD) shows a compositional bias: basic residues. Residues 239 to 249 (IHDKESHDLRS) are compositionally biased toward basic and acidic residues.

The protein belongs to the SKP1 family. In terms of assembly, part of a SCF (SKP1-cullin-F-box) protein ligase complex. In terms of tissue distribution, expressed in young seedlings, roots, leaves, floral stems, inflorescences, and siliques.

It localises to the nucleus. It functions in the pathway protein modification; protein ubiquitination. Functionally, involved in ubiquitination and subsequent proteasomal degradation of target proteins. Together with CUL1, RBX1 and a F-box protein, it forms a SCF E3 ubiquitin ligase complex. The functional specificity of this complex depends on the type of F-box protein. In the SCF complex, it serves as an adapter that links the F-box protein to CUL1. The protein is SKP1-like protein 20 (ASK20) of Arabidopsis thaliana (Mouse-ear cress).